Reading from the N-terminus, the 870-residue chain is Protein translocase subunit SecA (870 aa).

ATP contacts are provided by residues Gln86, Gly104 to Thr108, and Asp499. Zn(2+)-binding residues include Cys854, Cys856, Cys865, and His866.

The protein belongs to the SecA family. In terms of assembly, monomer and homodimer. Part of the essential Sec protein translocation apparatus which comprises SecA, SecYEG and auxiliary proteins SecDF-YajC and YidC. Zn(2+) serves as cofactor.

The protein resides in the cell inner membrane. The protein localises to the cytoplasm. It catalyses the reaction ATP + H2O + cellular proteinSide 1 = ADP + phosphate + cellular proteinSide 2.. In terms of biological role, part of the Sec protein translocase complex. Interacts with the SecYEG preprotein conducting channel. Has a central role in coupling the hydrolysis of ATP to the transfer of proteins into and across the cell membrane, serving both as a receptor for the preprotein-SecB complex and as an ATP-driven molecular motor driving the stepwise translocation of polypeptide chains across the membrane. In Ehrlichia ruminantium (strain Welgevonden), this protein is Protein translocase subunit SecA.